Here is a 543-residue protein sequence, read N- to C-terminus: Glutamyl-tRNA(Gln) amidotransferase subunit A, chloroplastic/mitochondrial (543 aa).

Active-site charge relay system residues include K121 and S196. Residue S220 is the Acyl-ester intermediate of the active site.

Belongs to the amidase family. GatA subfamily. In terms of assembly, subunit of the heterotrimeric GatCAB amidotransferase (AdT) complex, composed of A, B and C subunits.

The protein localises to the mitochondrion. It localises to the plastid. The protein resides in the chloroplast stroma. The enzyme catalyses L-glutamyl-tRNA(Gln) + L-glutamine + ATP + H2O = L-glutaminyl-tRNA(Gln) + L-glutamate + ADP + phosphate + H(+). Its function is as follows. Allows the formation of correctly charged Gln-tRNA(Gln) through the transamidation of misacylated Glu-tRNA(Gln) in chloroplasts and mitochondria. The reaction takes place in the presence of glutamine and ATP through an activated gamma-phospho-Glu-tRNA(Gln). The protein is Glutamyl-tRNA(Gln) amidotransferase subunit A, chloroplastic/mitochondrial of Zea mays (Maize).